The sequence spans 441 residues: Probable pyridine nucleotide-disulfide oxidoreductase RclA (441 aa).

33–43 (EQSNAMYGGTC) contributes to the FAD binding site. Cys-43 and Cys-48 are disulfide-bonded. The active-site Proton acceptor is His-426.

The protein belongs to the class-I pyridine nucleotide-disulfide oxidoreductase family. FAD is required as a cofactor.

Its function is as follows. Probably involved in reactive chlorine species (RCS) stress resistance. This Escherichia coli (strain K12) protein is Probable pyridine nucleotide-disulfide oxidoreductase RclA (rclA).